A 779-amino-acid polypeptide reads, in one-letter code: Pleckstrin homology domain-containing family A member 4 (779 aa).

Residues 54-153 form the PH domain; it reads PVHIRGWLHK…WLRALGRASR (100 aa). 3 disordered regions span residues 152 to 352, 492 to 670, and 691 to 764; these read SRAE…LPGP, AGLG…EGHR, and MTGG…LPQD. Ser-164 carries the phosphoserine modification. A compositionally biased stretch (basic and acidic residues) spans 184-193; that stretch reads SRGEEGRISE. A compositionally biased stretch (polar residues) spans 315-332; sequence QHWSQEPRTQAHSGSPTY. Positions 525–535 are enriched in low complexity; it reads PESLELSSPRS. The segment covering 536-551 has biased composition (basic and acidic residues); it reads PETDWGRPPGGDKDLA. Phosphoserine is present on Ser-559. Positions 594-603 are enriched in basic and acidic residues; the sequence is QLERMRRNQE. The segment covering 647–663 has biased composition (polar residues); the sequence is LRSSGSWSSPRNTTPYL. Positions 704–724 are enriched in pro residues; sequence PGVPLPPSDPTRQETPPPRSP.

As to expression, highly expressed in melanoma. Detected at low levels in heart, skeletal muscle, kidney, liver and small intestine.

Its subcellular location is the cytoplasm. It localises to the membrane. Its function is as follows. Binds specifically to phosphatidylinositol 3-phosphate (PtdIns3P), but not to other phosphoinositides. The protein is Pleckstrin homology domain-containing family A member 4 (PLEKHA4) of Homo sapiens (Human).